The sequence spans 214 residues: MLFTQLIILFTFISQIICVSISDLNNIALIQFTKRRGSSGHSSGGGHSSSGSHSSGGGHSSSGSSSSGSKGGGSSSGSSSGSSSGTKGGGSSSGSSSGSRNWGSNQYHCTGNSCGYGNYFAPSAAAAAVGYGTGRYTGGTKYGNNQYHCSGSTCGYGNYYAPTAASAAAGYGSARYAGQHNNSTSTKTSFGVSLNIPSTHFYVIGLAAAYSIVL.

The first 18 residues, 1–18, serve as a signal peptide directing secretion; that stretch reads MLFTQLIILFTFISQIIC. Positions 36–101 are disordered; it reads RGSSGHSSGG…SSGSSSGSRN (66 aa). The span at 42–60 shows a compositional bias: gly residues; that stretch reads SSGGGHSSSGSHSSGGGHS. The span at 76 to 85 shows a compositional bias: low complexity; the sequence is SGSSSGSSSG. Asn182 carries an N-linked (GlcNAc...) asparagine glycan. Residue Gly191 is the site of GPI-anchor amidated glycine attachment. A propeptide spans 192-214 (removed in mature form); sequence VSLNIPSTHFYVIGLAAAYSIVL.

Belongs to the PGA37 family.

It localises to the secreted. It is found in the cell membrane. Its function is as follows. Predicted GPI-anchored protein which may have a role during host infection. The polypeptide is Predicted GPI-anchored protein 57 (PGA57) (Candida albicans (strain SC5314 / ATCC MYA-2876) (Yeast)).